The primary structure comprises 159 residues: Small heat shock protein hspM (159 aa).

A sHSP domain is found at 1 to 159 (MFVLNFELAG…LSNNIKIQIN (159 aa)). The disordered stretch occupies residues 35–101 (MNNNNKNNLQ…NNNNKSSKTN (67 aa)). Composition is skewed to low complexity over residues 36 to 46 (NNNNKNNLQIN) and 61 to 95 (SSSS…NNNN).

This sequence belongs to the small heat shock protein (HSP20) family.

The chain is Small heat shock protein hspM (hspM) from Dictyostelium discoideum (Social amoeba).